The chain runs to 180 residues: Ribosome maturation factor RimM (180 aa).

One can recognise a PRC barrel domain in the interval 104-177; that stretch reads PEEFHDHQLV…RVVVDPPGGL (74 aa).

This sequence belongs to the RimM family. In terms of assembly, binds ribosomal protein uS19.

The protein resides in the cytoplasm. Its function is as follows. An accessory protein needed during the final step in the assembly of 30S ribosomal subunit, possibly for assembly of the head region. Essential for efficient processing of 16S rRNA. May be needed both before and after RbfA during the maturation of 16S rRNA. It has affinity for free ribosomal 30S subunits but not for 70S ribosomes. This chain is Ribosome maturation factor RimM, found in Salinispora tropica (strain ATCC BAA-916 / DSM 44818 / JCM 13857 / NBRC 105044 / CNB-440).